The chain runs to 354 residues: Long form salivary protein D7L3 (354 aa).

Positions 1-26 are cleaved as a signal peptide; that stretch reads MQLTPRSVHLVHLLLAATTLISPSWS.

The protein belongs to the PBP/GOBP family.

It localises to the secreted. Modulates blood feeding of female mosquitoes on vertebrate species by binding and sequestering different mediators involved in the host response. Binds serotonin with high affinity. Binds weakly noradrenaline and histamine. Does not bind tryptamine, octopamine, dopamine, adrenaline, leukotriene C4, leukotriene D4, leukotriene B4, ADP and U-46619, a stable analog of thromboxane A2. Inhibits agonist-induced platelet aggregation. Exhibits vasodilating activity. The chain is Long form salivary protein D7L3 from Anopheles gambiae (African malaria mosquito).